The chain runs to 227 residues: Cytochrome c oxidase subunit 2 (227 aa).

The Mitochondrial intermembrane portion of the chain corresponds to 1 to 14 (MAYPMQLGFQDATS). The helical transmembrane segment at 15-45 (PIMEELLHFHDHTLMIVFLISSLVLYVISLM) threads the bilayer. Residues 46 to 59 (LTTKLTHTSTMDAQ) lie on the Mitochondrial matrix side of the membrane. Residues 60–87 (EVETIWTILPAIILILIALPSLRILYMM) form a helical membrane-spanning segment. Residues 88–227 (DEINNPSLTV…YFEKWSASML (140 aa)) lie on the Mitochondrial intermembrane side of the membrane. 6 residues coordinate Cu cation: H161, C196, E198, C200, H204, and M207. E198 serves as a coordination point for Mg(2+). A Phosphotyrosine modification is found at Y218.

This sequence belongs to the cytochrome c oxidase subunit 2 family. In terms of assembly, component of the cytochrome c oxidase (complex IV, CIV), a multisubunit enzyme composed of 14 subunits. The complex is composed of a catalytic core of 3 subunits MT-CO1, MT-CO2 and MT-CO3, encoded in the mitochondrial DNA, and 11 supernumerary subunits COX4I, COX5A, COX5B, COX6A, COX6B, COX6C, COX7A, COX7B, COX7C, COX8 and NDUFA4, which are encoded in the nuclear genome. The complex exists as a monomer or a dimer and forms supercomplexes (SCs) in the inner mitochondrial membrane with NADH-ubiquinone oxidoreductase (complex I, CI) and ubiquinol-cytochrome c oxidoreductase (cytochrome b-c1 complex, complex III, CIII), resulting in different assemblies (supercomplex SCI(1)III(2)IV(1) and megacomplex MCI(2)III(2)IV(2)). Found in a complex with TMEM177, COA6, COX18, COX20, SCO1 and SCO2. Interacts with TMEM177 in a COX20-dependent manner. Interacts with COX20. Interacts with COX16. Cu cation is required as a cofactor.

It localises to the mitochondrion inner membrane. The catalysed reaction is 4 Fe(II)-[cytochrome c] + O2 + 8 H(+)(in) = 4 Fe(III)-[cytochrome c] + 2 H2O + 4 H(+)(out). Its function is as follows. Component of the cytochrome c oxidase, the last enzyme in the mitochondrial electron transport chain which drives oxidative phosphorylation. The respiratory chain contains 3 multisubunit complexes succinate dehydrogenase (complex II, CII), ubiquinol-cytochrome c oxidoreductase (cytochrome b-c1 complex, complex III, CIII) and cytochrome c oxidase (complex IV, CIV), that cooperate to transfer electrons derived from NADH and succinate to molecular oxygen, creating an electrochemical gradient over the inner membrane that drives transmembrane transport and the ATP synthase. Cytochrome c oxidase is the component of the respiratory chain that catalyzes the reduction of oxygen to water. Electrons originating from reduced cytochrome c in the intermembrane space (IMS) are transferred via the dinuclear copper A center (CU(A)) of subunit 2 and heme A of subunit 1 to the active site in subunit 1, a binuclear center (BNC) formed by heme A3 and copper B (CU(B)). The BNC reduces molecular oxygen to 2 water molecules using 4 electrons from cytochrome c in the IMS and 4 protons from the mitochondrial matrix. The protein is Cytochrome c oxidase subunit 2 (MT-CO2) of Rusa unicolor (Sambar).